Reading from the N-terminus, the 203-residue chain is Large ribosomal subunit protein bL25 (203 aa).

The protein belongs to the bacterial ribosomal protein bL25 family. CTC subfamily. Part of the 50S ribosomal subunit; part of the 5S rRNA/L5/L18/L25 subcomplex. Contacts the 5S rRNA. Binds to the 5S rRNA independently of L5 and L18.

Functionally, this is one of the proteins that binds to the 5S RNA in the ribosome where it forms part of the central protuberance. The sequence is that of Large ribosomal subunit protein bL25 from Wolbachia pipientis subsp. Culex pipiens (strain wPip).